Consider the following 165-residue polypeptide: U11/U12 small nuclear ribonucleoprotein 25 kDa protein (165 aa).

The Ubiquitin-like domain occupies 52-137 (MRLSVVKLDG…IRNNSQVTFM (86 aa)). Residues 145–165 (RGRHSKRKKHRLFRSLHKTSS) are disordered.

In terms of assembly, component of the U11/U12 snRNPs that are part of the U12-type spliceosome.

The protein localises to the nucleus. The sequence is that of U11/U12 small nuclear ribonucleoprotein 25 kDa protein (SNRNP25) from Arabidopsis thaliana (Mouse-ear cress).